We begin with the raw amino-acid sequence, 609 residues long: DNA mismatch repair protein MutL (609 aa).

This sequence belongs to the DNA mismatch repair MutL/HexB family.

Its function is as follows. This protein is involved in the repair of mismatches in DNA. It is required for dam-dependent methyl-directed DNA mismatch repair. May act as a 'molecular matchmaker', a protein that promotes the formation of a stable complex between two or more DNA-binding proteins in an ATP-dependent manner without itself being part of a final effector complex. In Rickettsia felis (strain ATCC VR-1525 / URRWXCal2) (Rickettsia azadi), this protein is DNA mismatch repair protein MutL.